Reading from the N-terminus, the 131-residue chain is MHNKRYNPDVVIDFGVDFSNDYNKSKNKFFDRYIIFNKDFMKYIFKLALRALIMIGIIELSYFISLGGFYLVSNDPIYFRNLSIFHARGVEFATECSDIISIFCSIAFVLFCIYDVGKYYVTKCKSSKRYQ.

The next 2 helical transmembrane spans lie at 52–72 (LIMI…FYLV) and 97–117 (SDII…YDVG).

It is found in the membrane. This is an uncharacterized protein from Acanthamoeba polyphaga mimivirus (APMV).